Consider the following 389-residue polypeptide: MGFRLAHLAACVARAAASSSRLRGPRPAASALVAPLLASPWEPSGGGQPHWLVPSRGHVGHSHHHHHGEEVGGEASERIFRLGLAADVVLTVGKAVTGYLSGSTAIAADAAHSLSDIVLSGVALLSYKAAKAPRDKEHPYGHGKFESLGALGISSMLLVTAGGIAWHAFDVLQGVMSSAPDIIGNVSHAHHSHGSSGHHHGIDLEHPILALSVTAFAISVKEGLYWITKRAGEKEGSGLMKANAWHHRSDAISSVVALLGVGGSILGVPYLDPLAGLVVSGMILKAGVHTGYESVLELVDAAVDPSLLQPIKETILQVDGVKGCHRLRGRKAGTSLYLDVHIEVYPFLSVSAAHDIGETVRHQIQKSHNQVAEVFIHIGSLQPLNQNAL.

At Met1–Arg81 the chain is on the cytoplasmic side. A helical transmembrane segment spans residues Leu82–Gly102. At Ser103–Thr104 the chain is on the vacuolar side. Residues Ala105 to Leu125 traverse the membrane as a helical segment. Topologically, residues Ser126–Leu148 are cytoplasmic. The helical transmembrane segment at Gly149–Phe169 threads the bilayer. Residues Asp170–His206 are Vacuolar-facing. Residues Pro207–Ile227 form a helical membrane-spanning segment. Over Thr228–Asp250 the chain is Cytoplasmic. A helical transmembrane segment spans residues Ala251 to Leu271. At Asp272 to Ala275 the chain is on the vacuolar side. The helical transmembrane segment at Gly276–Leu296 threads the bilayer. Topologically, residues Glu297–Leu389 are cytoplasmic.

The protein belongs to the cation diffusion facilitator (CDF) transporter (TC 2.A.4) family. SLC30A subfamily.

The protein resides in the vacuole membrane. In terms of biological role, involved in sequestration of excess metal in the cytoplasm into vacuoles to maintain metal homeostasis. This is Metal tolerance protein 2 (MTP2) from Oryza sativa subsp. japonica (Rice).